The chain runs to 439 residues: tRNA modification GTPase MnmE (439 aa).

3 residues coordinate (6S)-5-formyl-5,6,7,8-tetrahydrofolate: Arg20, Glu78, and Lys116. A TrmE-type G domain is found at 211 to 364; it reads GIYVTILGEP…LLNLIKQKVE (154 aa). GTP is bound by residues 221-226, 240-246, and 265-268; these read NSGKST, SEYAGTT, and DTAG. 2 residues coordinate Mg(2+): Ser225 and Thr246. Position 439 (Lys439) interacts with (6S)-5-formyl-5,6,7,8-tetrahydrofolate.

This sequence belongs to the TRAFAC class TrmE-Era-EngA-EngB-Septin-like GTPase superfamily. TrmE GTPase family. In terms of assembly, homodimer. Heterotetramer of two MnmE and two MnmG subunits. The cofactor is K(+).

Its subcellular location is the cytoplasm. Exhibits a very high intrinsic GTPase hydrolysis rate. Involved in the addition of a carboxymethylaminomethyl (cmnm) group at the wobble position (U34) of certain tRNAs, forming tRNA-cmnm(5)s(2)U34. The chain is tRNA modification GTPase MnmE from Ehrlichia chaffeensis (strain ATCC CRL-10679 / Arkansas).